A 408-amino-acid polypeptide reads, in one-letter code: Putative FBD-associated F-box protein At5g50270 (408 aa).

In terms of domain architecture, F-box spans 1–54 (MDRISGLPDELLLRVLSLLPNVKDVVVTMVLSKRWQFLWMMVPKLVYDDSYQNL). The 64-residue stretch at 345-408 (PLRDDLSSVP…VNPDKKYEMI (64 aa)) folds into the FBD domain.

In Arabidopsis thaliana (Mouse-ear cress), this protein is Putative FBD-associated F-box protein At5g50270.